An 816-amino-acid chain; its full sequence is MALGTYVPTAIRTSLLRKAAVVIVTIMLVLVGVGVFTTQAVSTQVTEQRDTELLTSTEQEAEALEEWIGRQRSATQYLSQDNAIQSAPQADKSEVLSTRISGLTETAAALHYVNLSTDTIRASTDAAVEGDTYTSYSIPWRGEGLSFYGGGDVITSSVFNYRGTPVMAFASKQPGSDNAVFVFHSVETRGEAFSRNIDGSYTQVVDIEGTVQIAADESAISSAYGAGRDAPVIATGLTTNSGIETRDGLLVGHAKVEGTDWVLLKHAPTSNAYALEGDVQRNIVVLIVTAVAGLGALVLVIGRDALTALTDMSDRAEAIAAGDIDTAIEETTRIDEVGDLRRSFRDIQEYLQTVAGQADALAEQDFDADALDKSVPGRLGESLETMHWDLETAIADLEDAQETAEQSRKEAEQSREEAEALAAALESQAQDIRETVEHAADGDLTQRLETDTDHESMAAIATALNSLLEELEGTIHRIQRFSKDVAESSDHITTSAEEVKRASGQVSESVQEMSADARQQNGIVQDVSDEMTDLSATIEEIASSSDEVAAKSNDAVSVGQSGRARSQDAIEEMNAVDEQAKRTIAEMEALDDEMTEIGEIVTLIDDIAEQTSMLALNASIEAARAGEAGEGFAVVADEIKSLSKETTEATQEIESLIADVQDSTTDAVTDMQEMGDRLSEGKSTVTDTVETIDTIVERIEEANGGVQTINTATDEQATTTEEVVTMVDEVGSISDDTTARAEDAAAAAEEQTASLTEVTNRIQDLSDQSTDLYELLSDFTVREDHAVADGGAENTTGAFVRSASTDHSRDATHHDT.

Transmembrane regions (helical) follow at residues 21–41 and 282–302; these read VVIV…TQAV and NIVV…LVIG. One can recognise an HAMP 1 domain in the interval 303 to 356; that stretch reads RDALTALTDMSDRAEAIAAGDIDTAIEETTRIDEVGDLRRSFRDIQEYLQTVAG. The interval 399–425 is disordered; it reads DAQETAEQSRKEAEQSREEAEALAAAL. Residues 405–418 show a composition bias toward basic and acidic residues; the sequence is EQSRKEAEQSREEA. The HAMP 2 domain occupies 423–476; that stretch reads AALESQAQDIRETVEHAADGDLTQRLETDTDHESMAAIATALNSLLEELEGTIH. Positions 495-731 constitute a Methyl-accepting transducer domain; that stretch reads SAEEVKRASG…EVVTMVDEVG (237 aa). The interval 790-816 is disordered; sequence GGAENTTGAFVRSASTDHSRDATHHDT. Residues 793–803 are compositionally biased toward polar residues; sequence ENTTGAFVRSA. Basic and acidic residues predominate over residues 804-816; the sequence is STDHSRDATHHDT.

The protein belongs to the methyl-accepting chemotaxis (MCP) protein family. In terms of processing, methylated by CheR.

It is found in the cell membrane. Functionally, potentially involved in chemo- or phototactic signal transduction. The sequence is that of Transducer protein Htr18 (htr18) from Halobacterium salinarum (strain ATCC 29341 / DSM 671 / R1).